Reading from the N-terminus, the 193-residue chain is Ion-translocating oxidoreductase complex subunit A (193 aa).

6 consecutive transmembrane segments (helical) span residues 5 to 25 (LLLL…FLGL), 39 to 59 (VGMG…AYLV), 72 to 92 (LSTL…EMVI), 102 to 122 (ILGI…LALL), 134 to 154 (VVYG…FASL), and 170 to 190 (IAIG…FTGL).

The protein belongs to the NqrDE/RnfAE family. As to quaternary structure, the complex is composed of six subunits: RnfA, RnfB, RnfC, RnfD, RnfE and RnfG.

The protein localises to the cell inner membrane. Its function is as follows. Part of a membrane-bound complex that couples electron transfer with translocation of ions across the membrane. This Tolumonas auensis (strain DSM 9187 / NBRC 110442 / TA 4) protein is Ion-translocating oxidoreductase complex subunit A.